The primary structure comprises 217 residues: Probable cytidylate kinase (217 aa).

An ATP-binding site is contributed by 9–17; it reads GPAGSGKST.

The protein belongs to the cytidylate kinase family. Type 1 subfamily.

It catalyses the reaction CMP + ATP = CDP + ADP. It carries out the reaction dCMP + ATP = dCDP + ADP. This Vairimorpha ceranae (strain BRL01) (Microsporidian parasite) protein is Probable cytidylate kinase.